The chain runs to 305 residues: UDP-3-O-acyl-N-acetylglucosamine deacetylase (305 aa).

3 residues coordinate Zn(2+): H78, H237, and D241. H264 serves as the catalytic Proton donor.

Belongs to the LpxC family. Zn(2+) serves as cofactor.

The enzyme catalyses a UDP-3-O-[(3R)-3-hydroxyacyl]-N-acetyl-alpha-D-glucosamine + H2O = a UDP-3-O-[(3R)-3-hydroxyacyl]-alpha-D-glucosamine + acetate. Its pathway is glycolipid biosynthesis; lipid IV(A) biosynthesis; lipid IV(A) from (3R)-3-hydroxytetradecanoyl-[acyl-carrier-protein] and UDP-N-acetyl-alpha-D-glucosamine: step 2/6. Its function is as follows. Catalyzes the hydrolysis of UDP-3-O-myristoyl-N-acetylglucosamine to form UDP-3-O-myristoylglucosamine and acetate, the committed step in lipid A biosynthesis. The protein is UDP-3-O-acyl-N-acetylglucosamine deacetylase of Burkholderia ambifaria (strain MC40-6).